An 86-amino-acid polypeptide reads, in one-letter code: Muscarinic toxin-like protein (86 aa).

An N-terminal signal peptide occupies residues 1–21; that stretch reads MKTLLLTLAVVTMVCMDLGYT. Disulfide bonds link cysteine 24-cysteine 45, cysteine 38-cysteine 62, cysteine 66-cysteine 78, and cysteine 79-cysteine 84.

Belongs to the three-finger toxin family. Short-chain subfamily. Orphan group VIII (haditoxin) sub-subfamily. As to quaternary structure, homodimer; non-covalently linked. In terms of tissue distribution, expressed by the venom gland.

It is found in the secreted. Functionally, antagonist of muscle and neuronal nicotinic acetylcholine receptors (nAChR) with highest affinity for neuronal alpha-7/CHRNA7 nAChRs. This is Muscarinic toxin-like protein from Bungarus multicinctus (Many-banded krait).